Here is an 84-residue protein sequence, read N- to C-terminus: MATMENKVICALVLVSMLALGTLAEAQTETCTVAPRERQNCGFPGVTPSQCANKGCCFDDTVRGVPWCFYPNTIDVPPEEECEF.

The first 24 residues, 1–24, serve as a signal peptide directing secretion; it reads MATMENKVICALVLVSMLALGTLA. Residues 29-72 enclose the P-type domain; sequence ETCTVAPRERQNCGFPGVTPSQCANKGCCFDDTVRGVPWCFYPN. Cystine bridges form between C31–C57, C41–C56, and C51–C68.

Heterodimer with GKN2; disulfide linked. As to expression, found in stomach, with highest levels in the upper gastric mucosal cells (at protein level). Detected in goblet cells of the small and large intestine and rectum, small submucosal glands in the esophagus, mucous acini of the sublingual gland, submucosal glands of the trachea, and epithelial cells lining the exocrine pancreatic ducts but not in the remainder of the pancreas (at protein level). Scattered expression is detected in the epithelial cells of the gallbladder and submucosal glands of the vagina, and weak expression is observed in the bronchial goblet cells of the pseudostratified epithelia in the respiratory system (at protein level). Detected in urine (at protein level). Strongly expressed in breast cancer but at low levels in normal mammary tissue. It is regulated by estrogen in MCF-7 cells. Strong expression found in normal gastric mucosa and in the regenerative tissues surrounding ulcerous lesions of gastrointestinal tract, but lower expression found in gastric cancer (at protein level).

Its subcellular location is the secreted. Its function is as follows. Stabilizer of the mucous gel overlying the gastrointestinal mucosa that provides a physical barrier against various noxious agents. May inhibit the growth of calcium oxalate crystals in urine. In Homo sapiens (Human), this protein is Trefoil factor 1 (TFF1).